Consider the following 259-residue polypeptide: 5'-nucleotidase SurE (259 aa).

Residues aspartate 8, aspartate 9, serine 39, and asparagine 93 each coordinate a divalent metal cation.

Belongs to the SurE nucleotidase family. A divalent metal cation is required as a cofactor.

Its subcellular location is the cytoplasm. The catalysed reaction is a ribonucleoside 5'-phosphate + H2O = a ribonucleoside + phosphate. In terms of biological role, nucleotidase that shows phosphatase activity on nucleoside 5'-monophosphates. The polypeptide is 5'-nucleotidase SurE (Thermococcus kodakarensis (strain ATCC BAA-918 / JCM 12380 / KOD1) (Pyrococcus kodakaraensis (strain KOD1))).